A 101-amino-acid chain; its full sequence is Putative pterin-4-alpha-carbinolamine dehydratase (101 aa).

Belongs to the pterin-4-alpha-carbinolamine dehydratase family.

The catalysed reaction is (4aS,6R)-4a-hydroxy-L-erythro-5,6,7,8-tetrahydrobiopterin = (6R)-L-erythro-6,7-dihydrobiopterin + H2O. The protein is Putative pterin-4-alpha-carbinolamine dehydratase of Burkholderia mallei (strain ATCC 23344).